A 637-amino-acid polypeptide reads, in one-letter code: 1-deoxy-D-xylulose-5-phosphate synthase (637 aa).

Thiamine diphosphate contacts are provided by residues H75 and 116-118 (AHS). Mg(2+) is bound at residue D147. Residues 148–149 (GA), N177, Y288, and E370 each bind thiamine diphosphate. N177 provides a ligand contact to Mg(2+).

The protein belongs to the transketolase family. DXPS subfamily. In terms of assembly, homodimer. Mg(2+) serves as cofactor. Requires thiamine diphosphate as cofactor.

The catalysed reaction is D-glyceraldehyde 3-phosphate + pyruvate + H(+) = 1-deoxy-D-xylulose 5-phosphate + CO2. It participates in metabolic intermediate biosynthesis; 1-deoxy-D-xylulose 5-phosphate biosynthesis; 1-deoxy-D-xylulose 5-phosphate from D-glyceraldehyde 3-phosphate and pyruvate: step 1/1. Catalyzes the acyloin condensation reaction between C atoms 2 and 3 of pyruvate and glyceraldehyde 3-phosphate to yield 1-deoxy-D-xylulose-5-phosphate (DXP). In Cupriavidus metallidurans (strain ATCC 43123 / DSM 2839 / NBRC 102507 / CH34) (Ralstonia metallidurans), this protein is 1-deoxy-D-xylulose-5-phosphate synthase.